A 202-amino-acid polypeptide reads, in one-letter code: Small ribosomal subunit protein uS4c (202 aa).

Residues 90-153 (MRLDNVIFRL…KSEAIISKNI (64 aa)) enclose the S4 RNA-binding domain.

It belongs to the universal ribosomal protein uS4 family. Part of the 30S ribosomal subunit. Contacts protein S5. The interaction surface between S4 and S5 is involved in control of translational fidelity.

It localises to the plastid. It is found in the chloroplast. In terms of biological role, one of the primary rRNA binding proteins, it binds directly to 16S rRNA where it nucleates assembly of the body of the 30S subunit. With S5 and S12 plays an important role in translational accuracy. The polypeptide is Small ribosomal subunit protein uS4c (rps4) (Cyathophorum bulbosum (Moss)).